A 157-amino-acid polypeptide reads, in one-letter code: Small ribosomal subunit protein uS7 (157 aa).

The protein belongs to the universal ribosomal protein uS7 family. Part of the 30S ribosomal subunit. Contacts proteins S9 and S11.

In terms of biological role, one of the primary rRNA binding proteins, it binds directly to 16S rRNA where it nucleates assembly of the head domain of the 30S subunit. Is located at the subunit interface close to the decoding center, probably blocks exit of the E-site tRNA. This Chlamydia caviae (strain ATCC VR-813 / DSM 19441 / 03DC25 / GPIC) (Chlamydophila caviae) protein is Small ribosomal subunit protein uS7.